Consider the following 246-residue polypeptide: Homeobox protein SIX6 (246 aa).

Positions 128 to 187 (GEQKTHCFKERTRHLLREWYLQDPYPNPSKKRELAQATGLTPTQVGNWFKNRRQRDRAAA) form a DNA-binding region, homeobox. Residues 190–246 (NRLQQQVLSQGSGRALRAEGDGTPEVLGVATSPAASLSSKAATSAISITSSDSECDI) form a disordered region. Positions 191–201 (RLQQQVLSQGS) are enriched in polar residues. Position 212 is a phosphothreonine (threonine 212). The segment covering 219–246 (ATSPAASLSSKAATSAISITSSDSECDI) has biased composition (low complexity). Phosphoserine is present on residues serine 221, serine 225, serine 227, and serine 228.

Belongs to the SIX/Sine oculis homeobox family. As to quaternary structure, interacts with TLE4 and TLE5. In terms of tissue distribution, expressed in the developing and adult retina. Also expressed in the hypothalamic and the pituitary regions.

The protein localises to the nucleus. Its function is as follows. May be involved in eye development. The polypeptide is Homeobox protein SIX6 (SIX6) (Homo sapiens (Human)).